The primary structure comprises 568 residues: Urease subunit alpha (568 aa).

The Urease domain occupies 133-568; the sequence is GGLDIHIHFN…ELPLAQRYLL (436 aa). Ni(2+) is bound by residues His-138, His-140, and Lys-217. Lys-217 is subject to N6-carboxylysine. His-219 provides a ligand contact to substrate. Ni(2+)-binding residues include His-246 and His-272. Catalysis depends on His-320, which acts as the Proton donor. Position 360 (Asp-360) interacts with Ni(2+).

This sequence belongs to the metallo-dependent hydrolases superfamily. Urease alpha subunit family. As to quaternary structure, heterotrimer of UreA (gamma), UreB (beta) and UreC (alpha) subunits. Three heterotrimers associate to form the active enzyme. Ni cation is required as a cofactor. Carboxylation allows a single lysine to coordinate two nickel ions.

It is found in the cytoplasm. It carries out the reaction urea + 2 H2O + H(+) = hydrogencarbonate + 2 NH4(+). Its pathway is nitrogen metabolism; urea degradation; CO(2) and NH(3) from urea (urease route): step 1/1. This chain is Urease subunit alpha, found in Haloarcula marismortui (strain ATCC 43049 / DSM 3752 / JCM 8966 / VKM B-1809) (Halobacterium marismortui).